Here is a 245-residue protein sequence, read N- to C-terminus: DNA polymerase sliding clamp (245 aa).

This sequence belongs to the PCNA family. In terms of assembly, homotrimer. The subunits circularize to form a toroid; DNA passes through its center. Replication factor C (RFC) is required to load the toroid on the DNA.

In terms of biological role, sliding clamp subunit that acts as a moving platform for DNA processing. Responsible for tethering the catalytic subunit of DNA polymerase and other proteins to DNA during high-speed replication. This Methanococcoides burtonii (strain DSM 6242 / NBRC 107633 / OCM 468 / ACE-M) protein is DNA polymerase sliding clamp.